A 110-amino-acid polypeptide reads, in one-letter code: MLNYLWFFLAALFEIFGCYAFWLWLRQGKSALWVIPALVSLTVFALLLTRVEAAYAGRAYAAYGGIYIVASIAWLGLVERVRPLGTDWLGLAFCVIGATIILLGPRWSAA.

The next 4 membrane-spanning stretches (helical) occupy residues 5 to 25 (LWFFLAALFEIFGCYAFWLWL), 28 to 48 (GKSALWVIPALVSLTVFALLL), 59 to 79 (AYAAYGGIYIVASIAWLGLVE), and 84 to 104 (LGTDWLGLAFCVIGATIILLG).

Belongs to the UPF0060 family.

It localises to the cell inner membrane. The polypeptide is UPF0060 membrane protein Psyr_3752 (Pseudomonas syringae pv. syringae (strain B728a)).